The chain runs to 1059 residues: Ubiquitin carboxyl-terminal hydrolase 36 (1059 aa).

Disordered regions lie at residues V24–M49 and S94–R148. The span at S94 to N123 shows a compositional bias: low complexity. The segment covering Q130–S139 has biased composition (polar residues). The USP domain maps to T171–D479. C180 (nucleophile) is an active-site residue. H438 functions as the Proton acceptor in the catalytic mechanism. Positions T505–T673 are disordered. Phosphoserine is present on residues S508 and S510. Residues G528–N539 show a composition bias toward polar residues. Composition is skewed to low complexity over residues A540 to Q560, N592 to N611, and A633 to A647. Positions M655–K664 are enriched in basic and acidic residues. Residues T673 and T682 each carry the phosphothreonine modification. Disordered regions lie at residues L687 to T893, K926 to N998, and K1012 to S1059. A phosphoserine mark is found at S692 and S694. Low complexity-rich tracts occupy residues T729–G739 and S752–A765. Position 766 is a phosphoserine (S766). Acidic residues predominate over residues S766–E776. The span at K779–Q795 shows a compositional bias: polar residues. The span at P799–P808 shows a compositional bias: pro residues. The residue at position 801 (S801) is a Phosphoserine. At T804 the chain carries Phosphothreonine. Position 807 is a phosphoserine (S807). Residues D825–E839 are compositionally biased toward acidic residues. 2 stretches are compositionally biased toward polar residues: residues Q842 to P862 and K876 to T893. 2 positions are modified to phosphothreonine: T846 and T861. Over residues K926–H940 the composition is skewed to basic and acidic residues. Residues Q1048 to S1059 are compositionally biased toward low complexity.

Belongs to the peptidase C19 family. As to quaternary structure, interacts with atms/PAF1, but not with CycT.

The protein localises to the nucleus. It is found in the nucleolus. It carries out the reaction Thiol-dependent hydrolysis of ester, thioester, amide, peptide and isopeptide bonds formed by the C-terminal Gly of ubiquitin (a 76-residue protein attached to proteins as an intracellular targeting signal).. Its function is as follows. Required for maintaining multiple types of adult stem cells, including male and female germline, epithelial follicle cell and intestinal stem cells. May function as a transcriptional repressor by continually deubiquiting histone H2B at the promoters of genes critical for cellular differentiation, thereby preventing histone H3 'Lys-4' trimethylation (H3K4). Controls selective autophagy activation by ubiquitinated proteins. The polypeptide is Ubiquitin carboxyl-terminal hydrolase 36 (Usp36) (Drosophila pseudoobscura pseudoobscura (Fruit fly)).